A 92-amino-acid polypeptide reads, in one-letter code: Small ribosomal subunit protein uS19 (92 aa).

This sequence belongs to the universal ribosomal protein uS19 family.

Functionally, protein S19 forms a complex with S13 that binds strongly to the 16S ribosomal RNA. The protein is Small ribosomal subunit protein uS19 of Corynebacterium diphtheriae (strain ATCC 700971 / NCTC 13129 / Biotype gravis).